Here is a 98-residue protein sequence, read N- to C-terminus: Small ribosomal subunit protein bS6 (98 aa).

This sequence belongs to the bacterial ribosomal protein bS6 family.

Its function is as follows. Binds together with bS18 to 16S ribosomal RNA. The sequence is that of Small ribosomal subunit protein bS6 from Staphylococcus aureus (strain NCTC 8325 / PS 47).